Here is a 125-residue protein sequence, read N- to C-terminus: uncharacterized protein (125 aa).

One can recognise an HTH dtxR-type domain in the interval 1-63; that stretch reads MSQSIEDYLE…YEPYIGITLT (63 aa).

This sequence belongs to the DtxR/MntR family.

This is an uncharacterized protein from Methanocaldococcus jannaschii (strain ATCC 43067 / DSM 2661 / JAL-1 / JCM 10045 / NBRC 100440) (Methanococcus jannaschii).